We begin with the raw amino-acid sequence, 411 residues long: Arginine deiminase (411 aa).

Cys401 serves as the catalytic Amidino-cysteine intermediate.

The protein belongs to the arginine deiminase family.

The protein localises to the cytoplasm. The catalysed reaction is L-arginine + H2O = L-citrulline + NH4(+). It participates in amino-acid degradation; L-arginine degradation via ADI pathway; carbamoyl phosphate from L-arginine: step 1/2. This chain is Arginine deiminase, found in Staphylococcus aureus (strain bovine RF122 / ET3-1).